The sequence spans 331 residues: Ketol-acid reductoisomerase (NADP(+)) (331 aa).

The region spanning 2–182 is the KARI N-terminal Rossmann domain; sequence AQLFYDSDAD…GGTRAGILET (181 aa). Residues 25–28, S51, S53, and 83–86 each bind NADP(+); these read YGSQ and DEFQ. H108 is a catalytic residue. Residue G134 coordinates NADP(+). Residues 183–328 enclose the KARI C-terminal knotted domain; it reads NFKEETETDL…KGLRAMFSWL (146 aa). D191, E195, E227, and E231 together coordinate Mg(2+). Substrate is bound at residue S252.

The protein belongs to the ketol-acid reductoisomerase family. Mg(2+) serves as cofactor.

The catalysed reaction is (2R)-2,3-dihydroxy-3-methylbutanoate + NADP(+) = (2S)-2-acetolactate + NADPH + H(+). It carries out the reaction (2R,3R)-2,3-dihydroxy-3-methylpentanoate + NADP(+) = (S)-2-ethyl-2-hydroxy-3-oxobutanoate + NADPH + H(+). Its pathway is amino-acid biosynthesis; L-isoleucine biosynthesis; L-isoleucine from 2-oxobutanoate: step 2/4. It functions in the pathway amino-acid biosynthesis; L-valine biosynthesis; L-valine from pyruvate: step 2/4. Involved in the biosynthesis of branched-chain amino acids (BCAA). Catalyzes an alkyl-migration followed by a ketol-acid reduction of (S)-2-acetolactate (S2AL) to yield (R)-2,3-dihydroxy-isovalerate. In the isomerase reaction, S2AL is rearranged via a Mg-dependent methyl migration to produce 3-hydroxy-3-methyl-2-ketobutyrate (HMKB). In the reductase reaction, this 2-ketoacid undergoes a metal-dependent reduction by NADPH to yield (R)-2,3-dihydroxy-isovalerate. This is Ketol-acid reductoisomerase (NADP(+)) from Prochlorococcus marinus (strain MIT 9211).